Reading from the N-terminus, the 481-residue chain is Autolysin (481 aa).

The Peptidase C51 domain maps to 7–142 (KNEFIERLKT…LQDDNMLMIS (136 aa)). The region spanning 198–323 (SNPKGIVIHN…NEFTSTSCPH (126 aa)) is the N-acetylmuramoyl-L-alanine amidase domain. An SH3b domain is found at 398–466 (EESARFTNGN…YLPIRTWNGS (69 aa)).

This sequence belongs to the N-acetylmuramoyl-L-alanine amidase 2 family.

It is found in the secreted. It carries out the reaction Hydrolyzes the link between N-acetylmuramoyl residues and L-amino acid residues in certain cell-wall glycopeptides.. Its function is as follows. Autolysins are involved in some important biological processes such as cell separation, cell-wall turnover, competence for genetic transformation, formation of the flagella and sporulation. Autolysin strictly depends on the presence of choline-containing cell walls for activity. The chain is Autolysin (lytA) from Staphylococcus aureus.